The sequence spans 419 residues: Farnesyl pyrophosphate synthase (419 aa).

N-acetylmethionine is present on methionine 1. Isopentenyl diphosphate-binding residues include lysine 123, arginine 126, and glutamine 162. Lysine 123 carries the N6-(2-hydroxyisobutyryl)lysine; alternate modification. At lysine 123 the chain carries N6-acetyllysine; alternate. Mg(2+) is bound by residues aspartate 169 and aspartate 173. Arginine 178 lines the dimethylallyl diphosphate pocket. Arginine 179 is an isopentenyl diphosphate binding site. 5 residues coordinate dimethylallyl diphosphate: lysine 266, threonine 267, glutamine 306, lysine 323, and lysine 332. Position 353 is an N6-acetyllysine (lysine 353).

Belongs to the FPP/GGPP synthase family. Homodimer. Interacts with RSAD2. As to quaternary structure, (Microbial infection) Interacts with HTLV-1 protein p13(II). The cofactor is Mg(2+).

The protein resides in the cytoplasm. It carries out the reaction isopentenyl diphosphate + dimethylallyl diphosphate = (2E)-geranyl diphosphate + diphosphate. The enzyme catalyses isopentenyl diphosphate + (2E)-geranyl diphosphate = (2E,6E)-farnesyl diphosphate + diphosphate. It functions in the pathway isoprenoid biosynthesis; farnesyl diphosphate biosynthesis; farnesyl diphosphate from geranyl diphosphate and isopentenyl diphosphate: step 1/1. Its pathway is isoprenoid biosynthesis; geranyl diphosphate biosynthesis; geranyl diphosphate from dimethylallyl diphosphate and isopentenyl diphosphate: step 1/1. With respect to regulation, inactivated by interferon-induced RSAD2. This inactivation may result of disruption of lipid rafts at the plasma membrane, and thus have an antiviral effect since many enveloped viruses need lipid rafts to bud efficiently out of the cell. In terms of biological role, key enzyme in isoprenoid biosynthesis which catalyzes the formation of farnesyl diphosphate (FPP), a precursor for several classes of essential metabolites including sterols, dolichols, carotenoids, and ubiquinones. FPP also serves as substrate for protein farnesylation and geranylgeranylation. Catalyzes the sequential condensation of isopentenyl pyrophosphate with the allylic pyrophosphates, dimethylallyl pyrophosphate, and then with the resultant geranylpyrophosphate to the ultimate product farnesyl pyrophosphate. The chain is Farnesyl pyrophosphate synthase from Homo sapiens (Human).